A 619-amino-acid polypeptide reads, in one-letter code: Type VI secretion system component TssF1 (619 aa).

Interacts with TssA1.

Its function is as follows. Core component of the H1 type VI (H1-T6SS) secretion system that plays a role in the release of toxins targeting both eukaryotic and prokaryotic species. The protein is Type VI secretion system component TssF1 of Pseudomonas aeruginosa (strain ATCC 15692 / DSM 22644 / CIP 104116 / JCM 14847 / LMG 12228 / 1C / PRS 101 / PAO1).